Consider the following 264-residue polypeptide: H-2 class II histocompatibility antigen, E-Q beta chain (264 aa).

Positions 1–26 (MVWLPRVPCVAAVILLLTVLSPPVAL) are cleaved as a signal peptide. The tract at residues 27–121 (VRDSRPWFLE…IFDNFLVRRR (95 aa)) is beta-1. Topologically, residues 27–225 (VRDSRPWFLE…KAQSTSAQNK (199 aa)) are extracellular. Intrachain disulfides connect Cys38–Cys106 and Cys144–Cys200. N-linked (GlcNAc...) asparagine glycosylation occurs at Asn46. The segment at 122-225 (VEPTVTVYPT…KAQSTSAQNK (104 aa)) is beta-2. The Ig-like C1-type domain occupies 124–214 (PTVTVYPTKT…PSLTDPVTVE (91 aa)). The helical transmembrane segment at 226-246 (MLSGVGGFVLGLLFLGAGLFI) threads the bilayer. Over 247 to 264 (YFRNQKGQSGLQPTGLLS) the chain is Cytoplasmic.

The protein belongs to the MHC class II family.

It is found in the membrane. This Mus musculus (Mouse) protein is H-2 class II histocompatibility antigen, E-Q beta chain.